A 510-amino-acid polypeptide reads, in one-letter code: MPRGFLVKRSKKSTPVSYRVRGGEDGDRALLLSPSCGGARAEPPAPSPVPGPLPPPPPAERAHAALAAALACAPGPQPPPQGPRAAHFGNPEAAHPAPLYSPTRPVSREHEKHKYFERSFNLGSPVSAESFPTPAALLGGGGGGGASGAGGGGTCGGDPLLFAPAELKMGTAFSAGAEAARGPGPGPPLPPAAALRPPGKRPPPPTAAEPPAKAVKAPGAKKPKAIRKLHFEDEVTTSPVLGLKIKEGPVEAPRGRAGGAARPLGEFICQLCKEEYADPFALAQHKCSRIVRVEYRCPECAKVFSCPANLASHRRWHKPRPAPAAARAPEPEAAARAEAREAPGGGSDRDTPSPGGVSESGSEDGLYECHHCAKKFRRQAYLRKHLLAHHQALQAKGAPLAPPAEDLLALYPGPDEKAPQEAAGDGEGAGVLGLSASAECHLCPVCGESFASKGAQERHLRLLHAAQVFPCKYCPATFYSSPGLTRHINKCHPSENRQVILLQVPVRPAC.

Over residues 1-12 (MPRGFLVKRSKK) the composition is skewed to basic residues. The SNAG domain stretch occupies residues 1–20 (MPRGFLVKRSKKSTPVSYRV). Disordered regions lie at residues 1–110 (MPRG…SREH) and 176–226 (GAEA…PKAI). Residues 2-7 (PRGFLV) form a required and sufficient for interaction with KDM1A region. The tract at residues 43–58 (PPAPSPVPGPLPPPPP) is necessary for interaction with CCND1. Residues 43–59 (PPAPSPVPGPLPPPPPA) show a composition bias toward pro residues. Low complexity-rich tracts occupy residues 64–74 (AALAAALACAP) and 209–218 (EPPAKAVKAP). The C2H2-type 1; atypical zinc-finger motif lies at 267-287 (FICQLCKEEYADPFALAQHKC). A C2H2-type 2 zinc finger spans residues 295–317 (YRCPECAKVFSCPANLASHRRWH). The segment at 315–362 (RWHKPRPAPAAARAPEPEAAARAEAREAPGGGSDRDTPSPGGVSESGS) is disordered. The segment covering 329-351 (PEPEAAARAEAREAPGGGSDRDT) has biased composition (basic and acidic residues). 3 consecutive C2H2-type zinc fingers follow at residues 367-389 (YECH…LLAH), 441-464 (HLCP…RLLH), and 469-492 (FPCK…NKCH).

It belongs to the INSM1 family. As to quaternary structure, interacts (via the SNAG domain) with HDAC1. Interacts (via the SNAG domain) with HDAC2. Interacts (via the SNAG domain) with KDM1A. Interacts (via the SNAG domain) with RCOR1. Interacts with SORBS1. Interacts (via the N-terminal region) with CCND1 (via cyclin N-terminal domain); the interaction competes with the binding of CCND1 to CDK4 during cell cycle progression and increases its transcriptional repressor activity. Interacts with HDAC3; the interaction increases its transcriptional repressor activity. As to expression, expressed in pancreatic duct cells. Expressed in several tumor cell lines of neuroendocrine origin including pheochromocytoma, medullary thyroid carcinoma, insulinoma, medulloblastoma, retinoblastoma, pheochromacytoma, medullary thyroid carcinoma and small cell lung carcinoma.

It localises to the nucleus. In terms of biological role, sequence-specific DNA-binding transcriptional regulator that plays a key role in neurogenesis and neuroendocrine cell differentiation during embryonic and/or fetal development. Binds to the consensus sequence 5'-[TG][TC][TC][TT][GA]GGG[CG]A-3' in target promoters. Acts as a transcriptional repressor of NEUROD1 and INS expression via its interaction with cyclin CCND1 in a cell cycle-independent manner. Negatively regulates skeletal muscle-specific gene expression in endocrine cells of the pituitary by inhibiting the Notch signaling pathway. Represses target gene transcription by recruiting chromatin-modifying factors, such as HDAC1, HDAC2, HDAC3, KDM1A and RCOR1 histone deacetylases. Binds to its own promoter, suggesting autoregulation as a self-control feedback mechanism. Competes with histone H3 for the same binding site on the histone demethylase complex formed by KDM1A and RCOR1, and thereby inhibits demethylation of histone H3 at 'Lys-4'. Promotes the generation and expansion of neuronal basal progenitor cells in the developing neocortex. Involved in the differentiation of endocrine cells of the developing anterior pituitary gland, of the pancreas and intestine, and of sympatho-adrenal cells in the peripheral nervous system. Promotes cell cycle signaling arrest and inhibition of cellular proliferation. The sequence is that of Insulinoma-associated protein 1 (INSM1) from Homo sapiens (Human).